Consider the following 418-residue polypeptide: Dwarfin sma-2 (418 aa).

The 127-residue stretch at 8-134 (KKITERLKWK…YKRVHATGVL (127 aa)) folds into the MH1 domain. Cys-62, Cys-107, Cys-119, and His-124 together coordinate Zn(2+). The region spanning 222-418 (WATVSYYELN…PTPRPISSIS (197 aa)) is the MH2 domain.

Belongs to the dwarfin/SMAD family.

The protein localises to the cytoplasm. It is found in the nucleus. In terms of biological role, involved in TGF-beta pathway. Plays a role in male tail tip morphogenesis. The protein is Dwarfin sma-2 of Caenorhabditis elegans.